A 316-amino-acid chain; its full sequence is MIQKIIFATLLSFTVAIISGRFFIPYLRKLKFGQKVREDGPKTHLKKSGTPTMGGIIFVVATFLTSLIFSPWNKYLFILLAGFLGYGLIGFADDFLKVYFKRSLGLRAREKLLAQFLLAIVISWFIKSNVGTEIIVPFFKRSVDLANFYIPFAVFIIVGTVNSVNLTDGLDGLAAGVSTIVMAFFAMIALFLNDVTYGVFSASLTGGLLGFLRYNKHPAEVFMGDTGSLAIGGAVATVALLTKLPLILPVLGIIYVAEAISVILQVFSFKLFGKRIFKMSPLHHHFELSGWKEEKVVYSFWLVTLIALFVSFYSLS.

10 consecutive transmembrane segments (helical) span residues 5 to 25 (IIFA…FFIP), 52 to 72 (TMGG…FSPW), 76 to 96 (LFIL…DDFL), 116 to 136 (FLLA…EIIV), 145 to 165 (LANF…NSVN), 172 to 192 (GLAA…ALFL), 195 to 212 (VTYG…LGFL), 221 to 241 (VFMG…VALL), 244 to 264 (LPLI…SVIL), and 296 to 316 (VVYS…YSLS).

This sequence belongs to the glycosyltransferase 4 family. MraY subfamily. The cofactor is Mg(2+).

It localises to the cell membrane. The catalysed reaction is UDP-N-acetyl-alpha-D-muramoyl-L-alanyl-gamma-D-glutamyl-meso-2,6-diaminopimeloyl-D-alanyl-D-alanine + di-trans,octa-cis-undecaprenyl phosphate = di-trans,octa-cis-undecaprenyl diphospho-N-acetyl-alpha-D-muramoyl-L-alanyl-D-glutamyl-meso-2,6-diaminopimeloyl-D-alanyl-D-alanine + UMP. It participates in cell wall biogenesis; peptidoglycan biosynthesis. Its function is as follows. Catalyzes the initial step of the lipid cycle reactions in the biosynthesis of the cell wall peptidoglycan: transfers peptidoglycan precursor phospho-MurNAc-pentapeptide from UDP-MurNAc-pentapeptide onto the lipid carrier undecaprenyl phosphate, yielding undecaprenyl-pyrophosphoryl-MurNAc-pentapeptide, known as lipid I. This Caldanaerobacter subterraneus subsp. tengcongensis (strain DSM 15242 / JCM 11007 / NBRC 100824 / MB4) (Thermoanaerobacter tengcongensis) protein is Phospho-N-acetylmuramoyl-pentapeptide-transferase.